We begin with the raw amino-acid sequence, 174 residues long: Large ribosomal subunit protein uL10 (174 aa).

The protein belongs to the universal ribosomal protein uL10 family. In terms of assembly, part of the ribosomal stalk of the 50S ribosomal subunit. The N-terminus interacts with L11 and the large rRNA to form the base of the stalk. The C-terminus forms an elongated spine to which L12 dimers bind in a sequential fashion forming a multimeric L10(L12)X complex.

Functionally, forms part of the ribosomal stalk, playing a central role in the interaction of the ribosome with GTP-bound translation factors. The polypeptide is Large ribosomal subunit protein uL10 (Verminephrobacter eiseniae (strain EF01-2)).